The chain runs to 276 residues: Integrin-binding sialoprotein (276 aa).

An N-terminal signal peptide occupies residues 1–16; sequence MRSALLLACLLATASA. Positions 54-251 are disordered; that stretch reads HRYKGSDSSE…EEPARGDSYR (198 aa). Residues 61 to 75 show a composition bias toward acidic residues; the sequence is SSEEEGDGSEEEEEG. Residues 106–119 are compositionally biased toward basic and acidic residues; the sequence is QDCKGGQKGTRGDS. The Cell attachment site motif lies at 116 to 118; the sequence is RGD. The span at 120–144 shows a compositional bias: acidic residues; the sequence is GDEDSDEEEEEEEEEEEEEEVEEQD. Residues 145–165 are compositionally biased toward polar residues; it reads VSVNGTSTNTTAETPHGNNTV. Residues Asn148, Asn153, and Asn162 are each glycosylated (N-linked (GlcNAc...) asparagine). The span at 167–188 shows a compositional bias: acidic residues; sequence AEEEEDDDEEEEEEEEEEEEAE. Residues 189 to 200 are compositionally biased toward low complexity; that stretch reads ATTAAATTAQDE. Positions 228–230 match the Cell attachment site motif; that stretch reads RGD. Residues 246-248 carry the Integrin-binding motif motif; sequence RGD. Residues Tyr272 and Tyr273 each carry the sulfotyrosine modification.

In terms of assembly, monomer. Interacts with integrins; the interaction promotes cell adhesion. Post-translationally, phosphorylated on serine and threonine residues.

It localises to the secreted. Functionally, binds tightly to hydroxyapatite. Appears to form an integral part of the mineralized matrix. Probably important to cell-matrix interaction. Promotes adhesion and migration of various cells via the alpha-V/beta-3 integrin receptor (ITGAV:ITGB3). This is Integrin-binding sialoprotein (IBSP) from Gallus gallus (Chicken).